Here is a 247-residue protein sequence, read N- to C-terminus: Opacity protein opA52 (247 aa).

A1 is a signal peptide.

Belongs to the opacity porin family.

Its subcellular location is the cell outer membrane. Functionally, implicated in a number of adherence functions. OPA proteins are implicated in pathogenesis and are subject to phase variation. The polypeptide is Opacity protein opA52 (opaG) (Neisseria gonorrhoeae).